A 292-amino-acid polypeptide reads, in one-letter code: GTP cyclohydrolase FolE2 (292 aa).

The protein belongs to the GTP cyclohydrolase IV family.

The catalysed reaction is GTP + H2O = 7,8-dihydroneopterin 3'-triphosphate + formate + H(+). It participates in cofactor biosynthesis; 7,8-dihydroneopterin triphosphate biosynthesis; 7,8-dihydroneopterin triphosphate from GTP: step 1/1. Its function is as follows. Converts GTP to 7,8-dihydroneopterin triphosphate. This is GTP cyclohydrolase FolE2 from Staphylococcus carnosus (strain TM300).